A 191-amino-acid chain; its full sequence is MASFSTNEFKAGLKVMYDGNPCAIIDNEFVKPGKGQAFNRVKLRNLRTGKVLEQTFKSGESLEGADVVDTEMNYLYNDGEFWHFMHPETFEQLQADANAMADAKQWLKENGNDLCTITLFNGVPLSVTAPNFVELEIVETDPGVRGDTSGGGGKPARLETGAVVRVPLFVQQNEVVRVDTRTGDYQTRVSQ.

N6-(3,6-diaminohexanoyl)-5-hydroxylysine is present on lysine 34.

The protein belongs to the elongation factor P family. Post-translationally, may be beta-lysylated on the epsilon-amino group of Lys-34 by the combined action of EpmA and EpmB, and then hydroxylated on the C5 position of the same residue by EpmC (if this protein is present). Lysylation is critical for the stimulatory effect of EF-P on peptide-bond formation. The lysylation moiety may extend toward the peptidyltransferase center and stabilize the terminal 3-CCA end of the tRNA. Hydroxylation of the C5 position on Lys-34 may allow additional potential stabilizing hydrogen-bond interactions with the P-tRNA.

The protein localises to the cytoplasm. The protein operates within protein biosynthesis; polypeptide chain elongation. Involved in peptide bond synthesis. Alleviates ribosome stalling that occurs when 3 or more consecutive Pro residues or the sequence PPG is present in a protein, possibly by augmenting the peptidyl transferase activity of the ribosome. Modification of Lys-34 is required for alleviation. The polypeptide is Elongation factor P (Psychrobacter sp. (strain PRwf-1)).